The primary structure comprises 1108 residues: DNA-directed RNA polymerase subunit beta (1108 aa).

Residues 1081 to 1108 are disordered; that stretch reads SPRRTPARPTIDYSALDDTDDKEGATTF.

The protein belongs to the RNA polymerase beta chain family. In cyanobacteria the RNAP catalytic core is composed of 2 alpha, 1 beta, 1 beta', 1 gamma and 1 omega subunit. When a sigma factor is associated with the core the holoenzyme is formed, which can initiate transcription.

The catalysed reaction is RNA(n) + a ribonucleoside 5'-triphosphate = RNA(n+1) + diphosphate. In terms of biological role, DNA-dependent RNA polymerase catalyzes the transcription of DNA into RNA using the four ribonucleoside triphosphates as substrates. This chain is DNA-directed RNA polymerase subunit beta, found in Thermosynechococcus vestitus (strain NIES-2133 / IAM M-273 / BP-1).